The primary structure comprises 285 residues: Tumor necrosis factor ligand superfamily member 13B (285 aa).

Topologically, residues 1-46 (MDDSTEREQSRLTSCLKKREEMKLKECVSILPRKESPSVRSSKDGK) are cytoplasmic. The helical; Signal-anchor for type II membrane protein transmembrane segment at 47-67 (LLAATLLLALLSCCLTVVSFY) threads the bilayer. Topologically, residues 68 to 285 (QVAALQGDLA…VTFFGALKLL (218 aa)) are extracellular. The disordered stretch occupies residues 114 to 138 (IFEPPAPGEGNSSQNSRNKRAVQGP). A glycan (N-linked (GlcNAc...) asparagine) is linked at N124. The region spanning 145–284 (DCLQLIADSE…DVTFFGALKL (140 aa)) is the THD domain. C232 and C245 are disulfide-bonded. The N-linked (GlcNAc...) (high mannose) asparagine glycan is linked to N242.

The protein belongs to the tumor necrosis factor family. In terms of assembly, homotrimer. Isoform 2 heteromultimerizes with isoform 1, probably limiting the amount of functional isoform 1 on the cell surface. Isoform 3 is unlikely form trimers or bind to BAFF receptors. In terms of processing, the soluble form derives from the membrane form by proteolytic processing. Post-translationally, isoform 2 is not efficiently shed from the membrane unlike isoform 1. N-glycosylated. Abundantly expressed in peripheral blood Leukocytes and is specifically expressed in monocytes and macrophages. Also found in the spleen, lymph node, bone marrow, T-cells and dendritic cells. A lower expression seen in placenta, heart, lung, fetal liver, thymus, and pancreas. Isoform 2 is expressed in many myeloid cell lines.

The protein localises to the cell membrane. The protein resides in the secreted. Its function is as follows. Cytokine that binds to TNFRSF13B/TACI and TNFRSF17/BCMA. TNFSF13/APRIL binds to the same 2 receptors. Together, they form a 2 ligands -2 receptors pathway involved in the stimulation of B- and T-cell function and the regulation of humoral immunity. A third B-cell specific BAFF-receptor (BAFFR/BR3) promotes the survival of mature B-cells and the B-cell response. Functionally, isoform 2 seems to inhibit isoform 1 secretion and bioactivity. In terms of biological role, acts as a transcription factor for its own parent gene, in association with NF-kappa-B p50 subunit, at least in autoimmune and proliferative B-cell diseases. The presence of Delta4BAFF is essential for soluble BAFF release by IFNG/IFN-gamma-stimulated monocytes and for B-cell survival. It can directly or indirectly regulate the differential expression of a large number of genes involved in the innate immune response and the regulation of apoptosis. In Homo sapiens (Human), this protein is Tumor necrosis factor ligand superfamily member 13B (TNFSF13B).